The following is a 447-amino-acid chain: Dihydrolipoyllysine-residue acetyltransferase component of pyruvate dehydrogenase complex (447 aa).

The 77-residue stretch at 2 to 78 (PINITMPALS…KVNALIAVLA (77 aa)) folds into the Lipoyl-binding domain. Lys-43 carries the post-translational modification N6-lipoyllysine. Positions 91–140 (GNGAAGAVPAPKPKETAETAPAAAPAPAAAPAPQAAAPASPAPADGEGKR) are disordered. The segment covering 108–134 (ETAPAAAPAPAAAPAPQAAAPASPAPA) has biased composition (low complexity). The Peripheral subunit-binding (PSBD) domain occupies 142–179 (FSSPLARRLAKEAGIDLSAIAGSGPHGRVVKKDVETAV). The active site involves His-420.

Belongs to the 2-oxoacid dehydrogenase family. As to quaternary structure, forms a 24-polypeptide structural core with octahedral symmetry. It depends on (R)-lipoate as a cofactor.

The enzyme catalyses N(6)-[(R)-dihydrolipoyl]-L-lysyl-[protein] + acetyl-CoA = N(6)-[(R)-S(8)-acetyldihydrolipoyl]-L-lysyl-[protein] + CoA. Functionally, the pyruvate dehydrogenase complex catalyzes the overall conversion of pyruvate to acetyl-CoA and CO(2). It contains multiple copies of three enzymatic components: pyruvate dehydrogenase (E1), dihydrolipoamide acetyltransferase (E2) and lipoamide dehydrogenase (E3). This chain is Dihydrolipoyllysine-residue acetyltransferase component of pyruvate dehydrogenase complex (pdhC), found in Rhizobium meliloti (strain 1021) (Ensifer meliloti).